Consider the following 175-residue polypeptide: Alkyl hydroperoxide reductase AhpD (175 aa).

The Proton donor role is filled by Cys131. The cysteines at positions 131 and 134 are disulfide-linked. Cys134 serves as the catalytic Cysteine sulfenic acid (-SOH) intermediate.

It belongs to the AhpD family.

The enzyme catalyses N(6)-[(R)-dihydrolipoyl]-L-lysyl-[lipoyl-carrier protein] + a hydroperoxide = N(6)-[(R)-lipoyl]-L-lysyl-[lipoyl-carrier protein] + an alcohol + H2O. Its function is as follows. Antioxidant protein with alkyl hydroperoxidase activity. Required for the reduction of the AhpC active site cysteine residues and for the regeneration of the AhpC enzyme activity. This is Alkyl hydroperoxide reductase AhpD from Brucella melitensis biotype 1 (strain ATCC 23456 / CCUG 17765 / NCTC 10094 / 16M).